Reading from the N-terminus, the 296-residue chain is MAGKSPLINLNNGVKMPALGLGVFAASAEETASAIASAISSGYRLIDTARSYNNEAQVGEGIRNSGVDRAEMFVTTKLFNCDYGYERALRAFDESLGRLGLDYVDLYLLHWPTKDWNATIQSWKAAEKILGDGRARAIGVCNFLEDQLDELIAASDVVPAVNQIELHPYFAQKPLLAKNRALGIVTEAWSPIGGAINDGDGDNHGGRKHPLTDPVITTIAEAHGRSAAQVILRWHFQNDVVAIPKSVNPERIAKNIDVFDFALSDAEMAQLDELDTGVRIGPDPRDVDTSSFAEFV.

13–22 (GVKMPALGLG) is a binding site for NADP(+). The active-site Proton donor is the Y52. H110 serves as a coordination point for substrate.

The protein belongs to the aldo/keto reductase family. As to quaternary structure, monomer.

The catalysed reaction is morphine + NAD(+) = morphinone + NADH + H(+). It carries out the reaction morphine + NADP(+) = morphinone + NADPH + H(+). The protein operates within alkaloid degradation; codeine degradation. Its pathway is alkaloid degradation; morphine degradation. Its function is as follows. Oxidizes only the C-6 hydroxy group of morphine and codeine. The sequence is that of Morphine 6-dehydrogenase (morA) from Pseudomonas putida (Arthrobacter siderocapsulatus).